Consider the following 564-residue polypeptide: Pyruvate decarboxylase (564 aa).

Residues aspartate 28 and histidine 115 each coordinate pyruvate. Residues threonine 390 and 413–415 (GSI) contribute to the thiamine diphosphate site. Aspartate 444 provides a ligand contact to Mg(2+). Thiamine diphosphate-binding positions include 445-446 (GS) and 471-476 (NDGYTI). Mg(2+) contacts are provided by asparagine 471 and glycine 473. A pyruvate-binding site is contributed by glutamate 477.

This sequence belongs to the TPP enzyme family. In terms of assembly, homotetramer. It depends on Mg(2+) as a cofactor. The cofactor is thiamine diphosphate.

It catalyses the reaction a 2-oxocarboxylate + H(+) = an aldehyde + CO2. It carries out the reaction pyruvate + H(+) = acetaldehyde + CO2. The polypeptide is Pyruvate decarboxylase (PDC1) (Candida glabrata (strain ATCC 2001 / BCRC 20586 / JCM 3761 / NBRC 0622 / NRRL Y-65 / CBS 138) (Yeast)).